The primary structure comprises 547 residues: Chaperonin GroEL (547 aa).

ATP is bound by residues 29 to 32, 86 to 90, glycine 413, 478 to 480, and aspartate 494; these read TLGP, DGTTT, and DVL.

It belongs to the chaperonin (HSP60) family. In terms of assembly, forms a cylinder of 14 subunits composed of two heptameric rings stacked back-to-back. Interacts with the co-chaperonin GroES.

The protein resides in the cytoplasm. The enzyme catalyses ATP + H2O + a folded polypeptide = ADP + phosphate + an unfolded polypeptide.. Functionally, together with its co-chaperonin GroES, plays an essential role in assisting protein folding. The GroEL-GroES system forms a nano-cage that allows encapsulation of the non-native substrate proteins and provides a physical environment optimized to promote and accelerate protein folding. The sequence is that of Chaperonin GroEL from Alkaliphilus metalliredigens (strain QYMF).